Reading from the N-terminus, the 367-residue chain is tRNA/tmRNA (uracil-C(5))-methyltransferase (367 aa).

S-adenosyl-L-methionine is bound by residues Q190, Y218, N223, E239, and D299. Catalysis depends on C324, which acts as the Nucleophile. The Proton acceptor role is filled by E358.

It belongs to the class I-like SAM-binding methyltransferase superfamily. RNA M5U methyltransferase family. TrmA subfamily.

It catalyses the reaction uridine(54) in tRNA + S-adenosyl-L-methionine = 5-methyluridine(54) in tRNA + S-adenosyl-L-homocysteine + H(+). The enzyme catalyses uridine(341) in tmRNA + S-adenosyl-L-methionine = 5-methyluridine(341) in tmRNA + S-adenosyl-L-homocysteine + H(+). In terms of biological role, dual-specificity methyltransferase that catalyzes the formation of 5-methyluridine at position 54 (m5U54) in all tRNAs, and that of position 341 (m5U341) in tmRNA (transfer-mRNA). The protein is tRNA/tmRNA (uracil-C(5))-methyltransferase of Yersinia enterocolitica serotype O:8 / biotype 1B (strain NCTC 13174 / 8081).